Consider the following 126-residue polypeptide: Methylglyoxal synthase (126 aa).

The MGS-like domain maps to 1–126 (MAGSKCLALI…AIKLLPTLEA (126 aa)). Residues His-12, Lys-16, 38 to 41 (TGTT), and 59 to 60 (SG) contribute to the substrate site. Asp-65 serves as the catalytic Proton donor/acceptor. Substrate is bound at residue His-92.

Belongs to the methylglyoxal synthase family.

The enzyme catalyses dihydroxyacetone phosphate = methylglyoxal + phosphate. Its function is as follows. Catalyzes the formation of methylglyoxal from dihydroxyacetone phosphate. This Rhizobium etli (strain ATCC 51251 / DSM 11541 / JCM 21823 / NBRC 15573 / CFN 42) protein is Methylglyoxal synthase.